Here is a 164-residue protein sequence, read N- to C-terminus: FMN reductase (NADH) RutF (164 aa).

Belongs to the non-flavoprotein flavin reductase family. RutF subfamily.

The catalysed reaction is FMNH2 + NAD(+) = FMN + NADH + 2 H(+). In terms of biological role, catalyzes the reduction of FMN to FMNH2 which is used to reduce pyrimidine by RutA via the Rut pathway. The sequence is that of FMN reductase (NADH) RutF from Escherichia coli O6:K15:H31 (strain 536 / UPEC).